The sequence spans 965 residues: Pullulanase 1, chloroplastic (965 aa).

The N-terminal 62 residues, 1-62, are a transit peptide targeting the chloroplast; that stretch reads MALTLTPTSS…SKTSLHCLCS (62 aa). Catalysis depends on Asp-552, which acts as the Nucleophile. Glu-589 functions as the Proton donor in the catalytic mechanism.

This sequence belongs to the glycosyl hydrolase 13 family.

The protein resides in the plastid. It is found in the chloroplast stroma. It catalyses the reaction Hydrolysis of (1-&gt;6)-alpha-D-glucosidic linkages in alpha- and beta-limit dextrins of amylopectin and glycogen, and in amylopectin and pullulan.. It functions in the pathway glycan biosynthesis; starch biosynthesis. It participates in glycan degradation; starch degradation. Functionally, involved in starch degradation and also probably in the trimming of pre-amylopectin chains during starch synthesis. This is Pullulanase 1, chloroplastic (PU1) from Arabidopsis thaliana (Mouse-ear cress).